Consider the following 153-residue polypeptide: 6,7-dimethyl-8-ribityllumazine synthase (153 aa).

5-amino-6-(D-ribitylamino)uracil-binding positions include Phe22, 56–58, and 80–82; these read AFE and TVI. 85–86 contacts (2S)-2-hydroxy-3-oxobutyl phosphate; the sequence is ST. His88 serves as the catalytic Proton donor. 5-amino-6-(D-ribitylamino)uracil is bound at residue Phe113. Arg127 serves as a coordination point for (2S)-2-hydroxy-3-oxobutyl phosphate.

It belongs to the DMRL synthase family. As to quaternary structure, forms an icosahedral capsid composed of 60 subunits, arranged as a dodecamer of pentamers.

The catalysed reaction is (2S)-2-hydroxy-3-oxobutyl phosphate + 5-amino-6-(D-ribitylamino)uracil = 6,7-dimethyl-8-(1-D-ribityl)lumazine + phosphate + 2 H2O + H(+). It functions in the pathway cofactor biosynthesis; riboflavin biosynthesis; riboflavin from 2-hydroxy-3-oxobutyl phosphate and 5-amino-6-(D-ribitylamino)uracil: step 1/2. Catalyzes the formation of 6,7-dimethyl-8-ribityllumazine by condensation of 5-amino-6-(D-ribitylamino)uracil with 3,4-dihydroxy-2-butanone 4-phosphate. This is the penultimate step in the biosynthesis of riboflavin. The chain is 6,7-dimethyl-8-ribityllumazine synthase from Actinobacillus pleuropneumoniae serotype 7 (strain AP76).